Reading from the N-terminus, the 366-residue chain is Alanine racemase (366 aa).

The active-site Proton acceptor; specific for D-alanine is the Lys-33. Lys-33 carries the N6-(pyridoxal phosphate)lysine modification. Arg-129 is a substrate binding site. Catalysis depends on Tyr-253, which acts as the Proton acceptor; specific for L-alanine. Met-301 provides a ligand contact to substrate.

Belongs to the alanine racemase family. It depends on pyridoxal 5'-phosphate as a cofactor.

The enzyme catalyses L-alanine = D-alanine. It participates in amino-acid biosynthesis; D-alanine biosynthesis; D-alanine from L-alanine: step 1/1. In terms of biological role, catalyzes the interconversion of L-alanine and D-alanine. May also act on other amino acids. The protein is Alanine racemase (alr) of Xanthomonas oryzae pv. oryzae (strain KACC10331 / KXO85).